The primary structure comprises 452 residues: Disintegrin and metalloproteinase domain-containing protein 11 (452 aa).

Residues 1 to 120 (RRHHSPLLVS…GGGSCLFNKP (120 aa)) enclose the Peptidase M12B domain. The Extracellular portion of the chain corresponds to 1 to 417 (RRHHSPLLVS…EKYKGPSGTN (417 aa)). Cystine bridges form between Cys31–Cys115, Cys74–Cys99, and Cys76–Cys83. Residues 126-214 (PPSCGNGFIE…ACPANLHKQD (89 aa)) enclose the Disintegrin domain. Asn149 is a glycosylation site (N-linked (GlcNAc...) asparagine). Residues Cys186 and Cys206 are joined by a disulfide bond. 2 N-linked (GlcNAc...) asparagine glycosylation sites follow: Asn288 and Asn356. 3 cysteine pairs are disulfide-bonded: Cys360–Cys375, Cys369–Cys381, and Cys383–Cys392. The EGF-like domain occupies 360–416 (CPGSWNGVICSDHGVCSNEGKCICHPEWTGKDCSVYDPLPVPKPTGVVEKYKGPSGT). The helical transmembrane segment at 418-438 (IIIGSIAGAVLIAAIVLGGTG) threads the bilayer. Topologically, residues 439–452 (WGFKNIRRGRSGGG) are cytoplasmic.

In terms of processing, the precursor is cleaved by a furin endopeptidase. As to expression, detected in testis and barely expressed in heart and muscle. Not detectable in liver.

It is found in the presynaptic cell membrane. The protein localises to the perikaryon. It localises to the cell projection. The protein resides in the axon. Its function is as follows. Probable ligand for integrin in the brain. This is a non-catalytic metalloprotease-like protein. This chain is Disintegrin and metalloproteinase domain-containing protein 11 (adam11), found in Xenopus laevis (African clawed frog).